The sequence spans 116 residues: MAAALTFRRLLALPRAARGFGVRVSLSGEKITHTGQVSDGKDYRGIRFVDRQKEVNENFAIDLIAQQPVNEVDRRIIACDGGGGALGHPKVYINLDKETKTGTCAYCGLQFKQQHH.

The N-terminal 20 residues, 1–20 (MAAALTFRRLLALPRAARGF), are a transit peptide targeting the mitochondrion. Lysine 90 is subject to N6-acetyllysine.

It belongs to the complex I NDUFS6 subunit family. Mammalian complex I is composed of 45 different subunits. This is a component of the iron-sulfur (IP) fragment of the enzyme.

The protein localises to the mitochondrion inner membrane. Its function is as follows. Accessory subunit of the mitochondrial membrane respiratory chain NADH dehydrogenase (Complex I), that is believed not to be involved in catalysis. Complex I functions in the transfer of electrons from NADH to the respiratory chain. The immediate electron acceptor for the enzyme is believed to be ubiquinone. The protein is NADH dehydrogenase [ubiquinone] iron-sulfur protein 6, mitochondrial (Ndufs6) of Rattus norvegicus (Rat).